A 172-amino-acid polypeptide reads, in one-letter code: Adenine phosphoribosyltransferase (172 aa).

The protein belongs to the purine/pyrimidine phosphoribosyltransferase family. In terms of assembly, homodimer.

It localises to the cytoplasm. The catalysed reaction is AMP + diphosphate = 5-phospho-alpha-D-ribose 1-diphosphate + adenine. The protein operates within purine metabolism; AMP biosynthesis via salvage pathway; AMP from adenine: step 1/1. Catalyzes a salvage reaction resulting in the formation of AMP, that is energically less costly than de novo synthesis. This is Adenine phosphoribosyltransferase from Polynucleobacter asymbioticus (strain DSM 18221 / CIP 109841 / QLW-P1DMWA-1) (Polynucleobacter necessarius subsp. asymbioticus).